The following is a 133-amino-acid chain: Interleukin-4 (133 aa).

The first 24 residues, 1 to 24, serve as a signal peptide directing secretion; it reads MGLTSQLIPTLVCLLACTSNFVHG. Intrachain disulfides connect Cys27/Cys133, Cys48/Cys85, and Cys70/Cys105. Asn62 carries N-linked (GlcNAc...) asparagine glycosylation.

It belongs to the IL-4/IL-13 family.

The protein localises to the secreted. In terms of biological role, participates in at least several B-cell activation processes as well as of other cell types. It is a costimulator of DNA-synthesis. It induces the expression of class II MHC molecules on resting B-cells. It enhances both secretion and cell surface expression of IgE and IgG1. It also regulates the expression of the low affinity Fc receptor for IgE (CD23) on both lymphocytes and monocytes. Positively regulates IL31RA expression in macrophages. Stimulates autophagy in dendritic cells by interfering with mTORC1 signaling and through the induction of RUFY4. The polypeptide is Interleukin-4 (IL4) (Sus scrofa (Pig)).